Consider the following 143-residue polypeptide: Probable glycine cleavage system H protein (143 aa).

The Lipoyl-binding domain maps to 36 to 118 (VATVGITDFA…YGEGWIFKIK (83 aa)). The residue at position 77 (Lys-77) is an N6-lipoyllysine.

The protein belongs to the GcvH family. In terms of assembly, the glycine cleavage system is composed of four proteins: P, T, L and H. The cofactor is (R)-lipoate.

The glycine cleavage system catalyzes the degradation of glycine. The H protein shuttles the methylamine group of glycine from the P protein to the T protein. The protein is Probable glycine cleavage system H protein of Aeropyrum pernix (strain ATCC 700893 / DSM 11879 / JCM 9820 / NBRC 100138 / K1).